Reading from the N-terminus, the 477-residue chain is Sucrose-6-phosphate hydrolase (477 aa).

Substrate is bound by residues 36–39 (WMND), Gln55, Trp63, 98–99 (FS), 160–161 (RD), Glu215, and Trp298. Residue Asp39 is part of the active site.

Belongs to the glycosyl hydrolase 32 family.

The protein localises to the cytoplasm. The catalysed reaction is Hydrolysis of terminal non-reducing beta-D-fructofuranoside residues in beta-D-fructofuranosides.. It functions in the pathway glycan biosynthesis; sucrose metabolism. Functionally, enables the bacterium to metabolize sucrose as a sole carbon source. This is Sucrose-6-phosphate hydrolase (cscA) from Escherichia coli.